A 90-amino-acid chain; its full sequence is Small ribosomal subunit protein uS17 (90 aa).

It belongs to the universal ribosomal protein uS17 family. In terms of assembly, part of the 30S ribosomal subunit.

In terms of biological role, one of the primary rRNA binding proteins, it binds specifically to the 5'-end of 16S ribosomal RNA. In Treponema denticola (strain ATCC 35405 / DSM 14222 / CIP 103919 / JCM 8153 / KCTC 15104), this protein is Small ribosomal subunit protein uS17.